A 952-amino-acid polypeptide reads, in one-letter code: 2-oxoglutarate dehydrogenase E1 component (952 aa).

Belongs to the alpha-ketoglutarate dehydrogenase family. In terms of assembly, homodimer. Part of the 2-oxoglutarate dehydrogenase (OGDH) complex composed of E1 (2-oxoglutarate dehydrogenase), E2 (dihydrolipoamide succinyltransferase) and E3 (dihydrolipoamide dehydrogenase); the complex contains multiple copies of the three enzymatic components (E1, E2 and E3). Thiamine diphosphate is required as a cofactor.

It carries out the reaction N(6)-[(R)-lipoyl]-L-lysyl-[protein] + 2-oxoglutarate + H(+) = N(6)-[(R)-S(8)-succinyldihydrolipoyl]-L-lysyl-[protein] + CO2. Its function is as follows. E1 component of the 2-oxoglutarate dehydrogenase (OGDH) complex which catalyzes the decarboxylation of 2-oxoglutarate, the first step in the conversion of 2-oxoglutarate to succinyl-CoA and CO(2). This Geobacillus sp. (strain WCH70) protein is 2-oxoglutarate dehydrogenase E1 component.